A 460-amino-acid polypeptide reads, in one-letter code: Proline--tRNA ligase (460 aa).

It belongs to the class-II aminoacyl-tRNA synthetase family. ProS type 3 subfamily. As to quaternary structure, homodimer.

The protein localises to the cytoplasm. It catalyses the reaction tRNA(Pro) + L-proline + ATP = L-prolyl-tRNA(Pro) + AMP + diphosphate. In terms of biological role, catalyzes the attachment of proline to tRNA(Pro) in a two-step reaction: proline is first activated by ATP to form Pro-AMP and then transferred to the acceptor end of tRNA(Pro). The chain is Proline--tRNA ligase from Methanococcus maripaludis (strain C6 / ATCC BAA-1332).